An 85-amino-acid chain; its full sequence is Small ribosomal subunit protein uS17 (85 aa).

Belongs to the universal ribosomal protein uS17 family. Part of the 30S ribosomal subunit.

In terms of biological role, one of the primary rRNA binding proteins, it binds specifically to the 5'-end of 16S ribosomal RNA. This Lachnoclostridium phytofermentans (strain ATCC 700394 / DSM 18823 / ISDg) (Clostridium phytofermentans) protein is Small ribosomal subunit protein uS17.